Here is a 342-residue protein sequence, read N- to C-terminus: Heat-inducible transcription repressor HrcA (342 aa).

The protein belongs to the HrcA family.

In terms of biological role, negative regulator of class I heat shock genes (grpE-dnaK-dnaJ and groELS operons). Prevents heat-shock induction of these operons. The sequence is that of Heat-inducible transcription repressor HrcA from Corynebacterium efficiens (strain DSM 44549 / YS-314 / AJ 12310 / JCM 11189 / NBRC 100395).